The chain runs to 130 residues: Probable pilin MJ0835.1 (130 aa).

The propeptide occupies Met1–Ala14. The QXSXEXXXL signature appears at Gln15–Leu23.

The N-terminus is cleaved by the prepilin peptidase EppA, which recognizes the class III signal sequence.

It localises to the secreted. The protein localises to the cell surface. Its subcellular location is the fimbrium. The sequence is that of Probable pilin MJ0835.1 from Methanocaldococcus jannaschii (strain ATCC 43067 / DSM 2661 / JAL-1 / JCM 10045 / NBRC 100440) (Methanococcus jannaschii).